A 587-amino-acid chain; its full sequence is MHRYRSHTCGELRASDVGSDVRLSGWLHNRRDLGGILFIDLRDHYGITQLVARPGTPAYEALDKVSKESTVRVDGKVVSRGTENVNPDLPTGEIEVEVSEVELLGAAAPLPFTINAEDGVNEERRLEYRFLDLRRERMHRNILLRTAVISAIRHKMTALGFNEMATPILSATSPEGARDFVVPSRLHPGKFYALPQAPQQFKQLLMISGFDRYFQIAPCFRDEDARADRSPGEFYQLDVEMSFVEQEDVFQPIEKLMTELFEEFGGGRHVTSPFPRIPFREAMLKYGSDKPDLRAQLELVDITDIFEGSEFKAFAGKHVRALPVPDVSGQTRKFFDGLGDYAVEQGAKGLAWVRVGEDGSLTGPIAKFLTEENVAELTKRLSLAPGHAVFFGAGEFDEVSKIMGAVRVEAAKRSGNFEENVFRFCWIVDFPMYEKDEDTGKIDFSHNPFSMPQGGLEALETQDPLDILGWQYDIVCNGVELSSGAIRNHEPEIMLKAFEIAGYDRDTVEEQFAGMLRAFRFGAPPHGGIAPGVDRIVMLLADEPNIRETIAFPLNGNAQDLMMGAPTELDETRLRELHLSVRKPQPK.

Glu175 serves as a coordination point for L-aspartate. Positions 199-202 (QQFK) are aspartate. Arg221 and His446 together coordinate L-aspartate. Residue 221–223 (RDE) coordinates ATP. Glu480 is an ATP binding site. Arg487 contacts L-aspartate. 532–535 (GVDR) contacts ATP.

Belongs to the class-II aminoacyl-tRNA synthetase family. Type 1 subfamily. Homodimer.

Its subcellular location is the cytoplasm. It carries out the reaction tRNA(Asp) + L-aspartate + ATP = L-aspartyl-tRNA(Asp) + AMP + diphosphate. In terms of biological role, catalyzes the attachment of L-aspartate to tRNA(Asp) in a two-step reaction: L-aspartate is first activated by ATP to form Asp-AMP and then transferred to the acceptor end of tRNA(Asp). This Streptomyces avermitilis (strain ATCC 31267 / DSM 46492 / JCM 5070 / NBRC 14893 / NCIMB 12804 / NRRL 8165 / MA-4680) protein is Aspartate--tRNA ligase.